A 1077-amino-acid chain; its full sequence is Carbamoyl phosphate synthase large chain (1077 aa).

The segment at 1-403 is carboxyphosphate synthetic domain; sequence MPKRTDIQSI…SLHKALRGLE (403 aa). ATP is bound by residues arginine 129, arginine 169, glycine 175, glycine 176, glutamate 208, leucine 210, glutamate 215, glycine 241, isoleucine 242, histidine 243, glutamine 285, and glutamate 299. The ATP-grasp 1 domain occupies 133-328; the sequence is DKAMKSIGLE…IAKIAAKLAV (196 aa). Mg(2+) is bound by residues glutamine 285, glutamate 299, and asparagine 301. 3 residues coordinate Mn(2+): glutamine 285, glutamate 299, and asparagine 301. An oligomerization domain region spans residues 404-553; the sequence is VGATGFDEMV…YSSYDDECEA (150 aa). The segment at 554 to 935 is carbamoyl phosphate synthetic domain; it reads NPTDKEKIMV…AYAKAELGCG (382 aa). An ATP-grasp 2 domain is found at 678–869; it reads QQAVDRLGLL…LAKIAARVMA (192 aa). The ATP site is built by arginine 714, arginine 753, leucine 755, glutamate 760, glycine 785, valine 786, histidine 787, serine 788, glutamine 828, and glutamate 840. Residues glutamine 828, glutamate 840, and asparagine 842 each coordinate Mg(2+). Mn(2+) is bound by residues glutamine 828, glutamate 840, and asparagine 842. Positions 936-1077 constitute an MGS-like domain; it reads NVYPEGGRAL…HAQVQASLKA (142 aa). The tract at residues 936–1077 is allosteric domain; that stretch reads NVYPEGGRAL…HAQVQASLKA (142 aa).

It belongs to the CarB family. Composed of two chains; the small (or glutamine) chain promotes the hydrolysis of glutamine to ammonia, which is used by the large (or ammonia) chain to synthesize carbamoyl phosphate. Tetramer of heterodimers (alpha,beta)4. It depends on Mg(2+) as a cofactor. Requires Mn(2+) as cofactor.

The catalysed reaction is hydrogencarbonate + L-glutamine + 2 ATP + H2O = carbamoyl phosphate + L-glutamate + 2 ADP + phosphate + 2 H(+). The enzyme catalyses hydrogencarbonate + NH4(+) + 2 ATP = carbamoyl phosphate + 2 ADP + phosphate + 2 H(+). Its pathway is amino-acid biosynthesis; L-arginine biosynthesis; carbamoyl phosphate from bicarbonate: step 1/1. The protein operates within pyrimidine metabolism; UMP biosynthesis via de novo pathway; (S)-dihydroorotate from bicarbonate: step 1/3. In terms of biological role, large subunit of the glutamine-dependent carbamoyl phosphate synthetase (CPSase). CPSase catalyzes the formation of carbamoyl phosphate from the ammonia moiety of glutamine, carbonate, and phosphate donated by ATP, constituting the first step of 2 biosynthetic pathways, one leading to arginine and/or urea and the other to pyrimidine nucleotides. The large subunit (synthetase) binds the substrates ammonia (free or transferred from glutamine from the small subunit), hydrogencarbonate and ATP and carries out an ATP-coupled ligase reaction, activating hydrogencarbonate by forming carboxy phosphate which reacts with ammonia to form carbamoyl phosphate. In Vibrio vulnificus (strain CMCP6), this protein is Carbamoyl phosphate synthase large chain.